A 507-amino-acid chain; its full sequence is UDP-glycosyltransferase 73D1 (507 aa).

UDP-alpha-D-glucose-binding positions include Ser298, Ser359–Gln361, His376–Glu384, and Phe398–Gln401.

Belongs to the UDP-glycosyltransferase family.

The polypeptide is UDP-glycosyltransferase 73D1 (UGT73D1) (Arabidopsis thaliana (Mouse-ear cress)).